The primary structure comprises 141 residues: Hemoglobin subunit alpha (141 aa).

The Globin domain occupies 1 to 141; sequence VLSPADKSNV…VSTVLTSKYR (141 aa). S3 carries the post-translational modification Phosphoserine. K7 and K11 each carry N6-succinyllysine. An N6-acetyllysine; alternate modification is found at K16. At K16 the chain carries N6-succinyllysine; alternate. Y24 bears the Phosphotyrosine mark. S35 is subject to Phosphoserine. Residue K40 is modified to N6-succinyllysine. Position 49 is a phosphoserine (S49). Residue H58 coordinates O2. H87 contributes to the heme b binding site. S102 bears the Phosphoserine mark. Phosphothreonine is present on T108. 2 positions are modified to phosphoserine: S124 and S131. A phosphothreonine mark is found at T134 and T137. S138 is subject to Phosphoserine.

Belongs to the globin family. As to quaternary structure, heterotetramer of two alpha chains and two beta chains. Red blood cells.

Involved in oxygen transport from the lung to the various peripheral tissues. In terms of biological role, hemopressin acts as an antagonist peptide of the cannabinoid receptor CNR1. Hemopressin-binding efficiently blocks cannabinoid receptor CNR1 and subsequent signaling. The protein is Hemoglobin subunit alpha (HBA) of Saguinus oedipus (Cotton-top tamarin).